The primary structure comprises 507 residues: Maturase K (507 aa).

It belongs to the intron maturase 2 family. MatK subfamily.

The protein resides in the plastid. The protein localises to the chloroplast. Functionally, usually encoded in the trnK tRNA gene intron. Probably assists in splicing its own and other chloroplast group II introns. In Persea americana (Avocado), this protein is Maturase K.